The following is a 191-amino-acid chain: MHDSNNVEKDITPSELPANPGCLHSKEHSIKATLIWRLFFLIMFLTIIVCGMVAALSAIRANCHQEPSVCLQAACPESWIGFQRKCFYFSDDTKNWTSSQRFCDSQDADLAQVESFQELNFLLRYKGPSDHWIGLSREQGQPWKWINGTEWTRQFPILGAGECAYLNDKGASSARHYTERKWICSKSDIHV.

Topologically, residues 1–38 are cytoplasmic; the sequence is MHDSNNVEKDITPSELPANPGCLHSKEHSIKATLIWRL. A helical; Signal-anchor for type II membrane protein transmembrane segment spans residues 39 to 59; sequence FFLIMFLTIIVCGMVAALSAI. Residues 60 to 191 lie on the Extracellular side of the membrane; the sequence is RANCHQEPSV…WICSKSDIHV (132 aa). A disulfide bond links cysteine 75 and cysteine 86. The C-type lectin domain occupies 82–185; it reads FQRKCFYFSD…HYTERKWICS (104 aa). N-linked (GlcNAc...) asparagine glycans are attached at residues asparagine 95 and asparagine 147. The cysteines at positions 103 and 184 are disulfide-linked.

Homodimer; disulfide-linked. N-glycosylated. As to expression, detected in peripheral blood leukocytes, osteoblasts, lymph node, thymus and spleen. Isoform 1, isoform 2 and isoform 4 are expressed in T- and B-lymphocytes, and at lower levels in NK cells. They are also expressed in B-cell lines and LPS-matured monocyte-derived dendritic cells.

The protein localises to the cell membrane. It localises to the endoplasmic reticulum. Its function is as follows. Receptor for KLRB1 that protects target cells against natural killer cell-mediated lysis. Inhibits osteoclast formation. Inhibits bone resorption. Modulates the release of interferon-gamma. Binds high molecular weight sulfated glycosaminoglycans. The polypeptide is C-type lectin domain family 2 member D (CLEC2D) (Homo sapiens (Human)).